We begin with the raw amino-acid sequence, 263 residues long: Endonuclease 8 (263 aa).

Residue Pro-2 is the Schiff-base intermediate with DNA of the active site. Glu-3 (proton donor) is an active-site residue. The Proton donor; for beta-elimination activity role is filled by Lys-53. DNA-binding residues include Gln-70, Arg-125, and Asn-169. The FPG-type zinc-finger motif lies at 229–263 (KVFHRDGEPCERCGGIIEKTTLSSRPFYWCPGCQH). Residue Arg-253 is the Proton donor; for delta-elimination activity of the active site.

The protein belongs to the FPG family. The cofactor is Zn(2+).

It carries out the reaction 2'-deoxyribonucleotide-(2'-deoxyribose 5'-phosphate)-2'-deoxyribonucleotide-DNA = a 3'-end 2'-deoxyribonucleotide-(2,3-dehydro-2,3-deoxyribose 5'-phosphate)-DNA + a 5'-end 5'-phospho-2'-deoxyribonucleoside-DNA + H(+). In terms of biological role, involved in base excision repair of DNA damaged by oxidation or by mutagenic agents. Acts as a DNA glycosylase that recognizes and removes damaged bases. Has a preference for oxidized pyrimidines, such as thymine glycol, 5,6-dihydrouracil and 5,6-dihydrothymine. Has AP (apurinic/apyrimidinic) lyase activity and introduces nicks in the DNA strand. Cleaves the DNA backbone by beta-delta elimination to generate a single-strand break at the site of the removed base with both 3'- and 5'-phosphates. The protein is Endonuclease 8 of Escherichia coli O6:K15:H31 (strain 536 / UPEC).